Consider the following 350-residue polypeptide: Twinfilin-1 (350 aa).

2 ADF-H domains span residues 4 to 139 (QTGI…KYLA) and 177 to 313 (GIAF…EEVH). Residues 316–350 (QHAHKQNFAKPKGPAGKRGIRRLIRGPAEAETAND) form a disordered region.

This sequence belongs to the actin-binding proteins ADF family. Twinfilin subfamily. As to quaternary structure, interacts with G-actin; ADP-actin form.

The protein resides in the cytoplasm. Its subcellular location is the cytoskeleton. In terms of biological role, actin-binding protein involved in motile and morphological processes. Inhibits actin polymerization, likely by sequestering G-actin. This is Twinfilin-1 (twf1) from Xenopus tropicalis (Western clawed frog).